The sequence spans 759 residues: DNA topoisomerase 4 subunit A (759 aa).

The Topo IIA-type catalytic domain occupies 44–516 (LPDVRDGLKP…VFGEAPQVDA (473 aa)). Tyr132 functions as the O-(5'-phospho-DNA)-tyrosine intermediate in the catalytic mechanism.

This sequence belongs to the type II topoisomerase GyrA/ParC subunit family. ParC type 1 subfamily. In terms of assembly, heterotetramer composed of ParC and ParE.

Its subcellular location is the cell membrane. The catalysed reaction is ATP-dependent breakage, passage and rejoining of double-stranded DNA.. Its function is as follows. Topoisomerase IV is essential for chromosome segregation. It relaxes supercoiled DNA. Performs the decatenation events required during the replication of a circular DNA molecule. In Caulobacter vibrioides (strain ATCC 19089 / CIP 103742 / CB 15) (Caulobacter crescentus), this protein is DNA topoisomerase 4 subunit A.